A 691-amino-acid polypeptide reads, in one-letter code: Elongation factor G (691 aa).

Residues 8–283 (EDYRNFGIMA…AVVDYLPSPI (276 aa)) form the tr-type G domain. GTP is bound by residues 17–24 (AHIDAGKT), 81–85 (DTPGH), and 135–138 (NKMD).

This sequence belongs to the TRAFAC class translation factor GTPase superfamily. Classic translation factor GTPase family. EF-G/EF-2 subfamily.

Its subcellular location is the cytoplasm. Its function is as follows. Catalyzes the GTP-dependent ribosomal translocation step during translation elongation. During this step, the ribosome changes from the pre-translocational (PRE) to the post-translocational (POST) state as the newly formed A-site-bound peptidyl-tRNA and P-site-bound deacylated tRNA move to the P and E sites, respectively. Catalyzes the coordinated movement of the two tRNA molecules, the mRNA and conformational changes in the ribosome. This Methylocella silvestris (strain DSM 15510 / CIP 108128 / LMG 27833 / NCIMB 13906 / BL2) protein is Elongation factor G.